Reading from the N-terminus, the 306-residue chain is Glutathione transport system permease protein GsiC (306 aa).

The Cytoplasmic portion of the chain corresponds to 1–8 (MLNYVLKR). A helical transmembrane segment spans residues 9-29 (LLGLIPTLLIVAVLVFLFVHL). At 30 to 102 (LPGDPARLIA…SRFLPTLWLT (73 aa)) the chain is on the periplasmic side. In terms of domain architecture, ABC transmembrane type-1 spans 95–292 (FLPTLWLTIT…LEFILINLVV (198 aa)). Residues 103–123 (ITSMIWAVLFGMAIGIAAAVW) form a helical membrane-spanning segment. Residues 124 to 134 (RNRWPDRLGMT) are Cytoplasmic-facing. A helical membrane pass occupies residues 135 to 155 (LAVTGISFPAFALGMLLMQIF). The Periplasmic portion of the chain corresponds to 156-168 (SVDLGWLPTVGAD). The helical transmembrane segment at 169-189 (SWQHYILPSLTLGAAVASVMA) threads the bilayer. Over 190–228 (RFTRSSFVDVLSEDYMRTARAKGVSETWVVLKHGLRNAM) the chain is Cytoplasmic. A helical membrane pass occupies residues 229-249 (IPVVTMMGLQFGFLLGGSIVV). Residues 250 to 278 (EKVFNWPGLGRLLVDSVDMRDYPVIQAEV) lie on the Periplasmic side of the membrane. A helical transmembrane segment spans residues 279 to 299 (LLFSLEFILINLVVDVLYAAI). The Cytoplasmic portion of the chain corresponds to 300–306 (NPAIRYK).

It belongs to the binding-protein-dependent transport system permease family. The complex is composed of two ATP-binding proteins (GsiA), two transmembrane proteins (GsiC and GsiD) and a solute-binding protein (GsiB).

Its subcellular location is the cell inner membrane. Its function is as follows. Part of the ABC transporter complex GsiABCD involved in glutathione import. Probably responsible for the translocation of the substrate across the membrane. The polypeptide is Glutathione transport system permease protein GsiC (Salmonella paratyphi A (strain ATCC 9150 / SARB42)).